We begin with the raw amino-acid sequence, 122 residues long: LYR motif-containing protein 1 (122 aa).

This sequence belongs to the complex I LYR family.

May promote cell proliferation and inhibition of apoptosis of preadipocytes. The chain is LYR motif-containing protein 1 (Lyrm1) from Mus musculus (Mouse).